The following is a 644-amino-acid chain: Exoribonuclease 2 (644 aa).

The RNB domain occupies 189 to 516; it reads REDLTALNFV…NHRLLKAIIA (328 aa). The 83-residue stretch at 561–643 folds into the S1 motif domain; sequence DERFNAEIID…ETRSVIARPA (83 aa).

Belongs to the RNR ribonuclease family. RNase II subfamily.

Its subcellular location is the cytoplasm. The catalysed reaction is Exonucleolytic cleavage in the 3'- to 5'-direction to yield nucleoside 5'-phosphates.. Its function is as follows. Involved in mRNA degradation. Hydrolyzes single-stranded polyribonucleotides processively in the 3' to 5' direction. In Serratia proteamaculans (strain 568), this protein is Exoribonuclease 2.